Consider the following 360-residue polypeptide: Ankyrin repeat domain-containing protein 2 (360 aa).

The tract at residues 5 to 120 is may mediate interaction with PML, p53/TP53 and YBX1; sequence PSWAGVGALA…GIQNLIELRK (116 aa). Ser99 is subject to Phosphoserine; by PKB/AKT2. Residues 126–147 form a disordered region; it reads KRDALAASHEPPPEPEEITGPV. Residues 138-147 show a composition bias toward acidic residues; that stretch reads PEPEEITGPV. ANK repeat units lie at residues 147-176, 180-209, 213-242, 246-275, and 279-308; these read VDEE…SADT, FRRT…TVDF, LDCT…DTNV, LLST…EINA, and EGDT…DMMT. The segment covering 330–342 has biased composition (basic and acidic residues); it reads ALEHPEPGAEHNG. The tract at residues 330–360 is disordered; the sequence is ALEHPEPGAEHNGLEGPNDSGRETPQPVPAQ.

Interacts with ID3; both proteins cooperate in myoblast differentiation. Interacts with TTN/titin. Interacts (via ANK repeats) with TCAP; the interaction is direct. Interacts with TJP1 (via PDZ domains). Interacts with PML; the interaction is direct. Interacts with p53/TP53. Interacts with YBX1. Interacts with AKT2. Post-translationally, phosphorylation at Ser-99 by PKB/AKT2 in response to oxidative stress induces translocation to the nucleus and negatively regulates myoblast differentiation. Mostly expressed in skeletal and cardiac muscles. Found in slow fibers. Also expressed in kidney, but to a lower extent (at protein level).

Its subcellular location is the cytoplasm. It is found in the myofibril. The protein localises to the sarcomere. It localises to the i band. The protein resides in the cytosol. Its subcellular location is the nucleus. It is found in the PML body. Its function is as follows. Functions as a negative regulator of myocyte differentiation. May interact with both sarcoplasmic structural proteins and nuclear proteins to regulate gene expression during muscle development and in response to muscle stress. This chain is Ankyrin repeat domain-containing protein 2 (ANKRD2), found in Homo sapiens (Human).